The primary structure comprises 261 residues: uncharacterized protein (261 aa).

One can recognise an ABC transporter domain in the interval Met1 to Trp236. Gly36 to Ser43 contributes to the ATP binding site.

Belongs to the ABC transporter superfamily.

This is an uncharacterized protein from Methanocaldococcus jannaschii (strain ATCC 43067 / DSM 2661 / JAL-1 / JCM 10045 / NBRC 100440) (Methanococcus jannaschii).